The primary structure comprises 423 residues: Serine--tRNA ligase 1 (423 aa).

231–233 (TAE) serves as a coordination point for L-serine. 262–264 (RSE) is an ATP binding site. Position 285 (Glu285) interacts with L-serine. 349–352 (EISS) contributes to the ATP binding site. Ser384 is an L-serine binding site.

The protein belongs to the class-II aminoacyl-tRNA synthetase family. Type-1 seryl-tRNA synthetase subfamily. In terms of assembly, homodimer. The tRNA molecule binds across the dimer.

Its subcellular location is the cytoplasm. The catalysed reaction is tRNA(Ser) + L-serine + ATP = L-seryl-tRNA(Ser) + AMP + diphosphate + H(+). The enzyme catalyses tRNA(Sec) + L-serine + ATP = L-seryl-tRNA(Sec) + AMP + diphosphate + H(+). Its pathway is aminoacyl-tRNA biosynthesis; selenocysteinyl-tRNA(Sec) biosynthesis; L-seryl-tRNA(Sec) from L-serine and tRNA(Sec): step 1/1. Its function is as follows. Catalyzes the attachment of serine to tRNA(Ser). Is also able to aminoacylate tRNA(Sec) with serine, to form the misacylated tRNA L-seryl-tRNA(Sec), which will be further converted into selenocysteinyl-tRNA(Sec). The polypeptide is Serine--tRNA ligase 1 (Enterococcus faecalis (strain ATCC 700802 / V583)).